A 245-amino-acid chain; its full sequence is Zinc finger protein 575 (245 aa).

The tract at residues 1-67 is disordered; that stretch reads MLERGAESAA…PPQRPHRCPD (67 aa). Over residues 36 to 49 the composition is skewed to low complexity; sequence PSQSAPGPTASAGS. Residues 52 to 63 show a composition bias toward basic residues; that stretch reads RPRRRPPPQRPH. 6 consecutive C2H2-type zinc fingers follow at residues 63–85, 91–113, 119–141, 147–169, 177–199, and 213–240; these read HRCP…RLAH, HPCP…RLTH, HPCP…LWTH, YPCP…RHTH, YPCP…RLCH, and HRCS…QVEH.

This sequence belongs to the krueppel C2H2-type zinc-finger protein family.

Its subcellular location is the nucleus. May be involved in transcriptional regulation. The polypeptide is Zinc finger protein 575 (ZNF575) (Homo sapiens (Human)).